A 690-amino-acid polypeptide reads, in one-letter code: Eukaryotic translation initiation factor 3 subunit B (690 aa).

Basic and acidic residues predominate over residues 1-11 (MAKKKSEEHSG). The tract at residues 1–36 (MAKKKSEEHSGADANDSDYQEEPNFEDPPGFVDNIS) is disordered. Over residues 15 to 25 (NDSDYQEEPNF) the composition is skewed to acidic residues. Residues 57–141 (SVVVVDNIPK…HTFAVNLFTD (85 aa)) enclose the RRM domain. 5 WD repeats span residues 207 to 246 (TRERFTDTFVKWSPLGTYVVTFHKPGVAIWGGSSFQKIQK), 293 to 331 (DGMSVLSMFRWSHDDKFVARMGENSIHIYETPSFFLLDL), 334 to 369 (IKIPGIRGFSWSPTDNVIAYWVEEQNQIPARVTLME), 442 to 484 (EIRE…KPSL), and 530 to 575 (PDHF…IKRT). Residues 595–645 (EEKQKEIKKNLKKYYAAFEQKDRLRLTRASKELLEKRSQLRETFMEYRNKR) are a coiled coil.

This sequence belongs to the eIF-3 subunit B family. Component of the eukaryotic translation initiation factor 3 (eIF-3) complex. The eIF-3 complex interacts with pix. Interacts with mxt.

The protein localises to the cytoplasm. Its function is as follows. RNA-binding component of the eukaryotic translation initiation factor 3 (eIF-3) complex, which is involved in protein synthesis of a specialized repertoire of mRNAs and, together with other initiation factors, stimulates binding of mRNA and methionyl-tRNAi to the 40S ribosome. The eIF-3 complex specifically targets and initiates translation of a subset of mRNAs involved in cell proliferation. This Drosophila erecta (Fruit fly) protein is Eukaryotic translation initiation factor 3 subunit B.